Reading from the N-terminus, the 550-residue chain is Invertase (550 aa).

An N-terminal signal peptide occupies residues 1–22 (MIQLSPLLLLPLFSVFNSIADA). Substrate is bound by residues 39–42 (WMND), Gln-60, and 103–104 (FS). The active site involves Asp-42. N-linked (GlcNAc...) asparagine glycans are attached at residues Asn-112, Asn-113, Asn-119, and Asn-165. Substrate is bound at residue 170 to 171 (RD). Asn-211 is a glycosylation site (N-linked (GlcNAc...) asparagine). Glu-223 provides a ligand contact to substrate. Asn-237 is a glycosylation site (N-linked (GlcNAc...) asparagine). Trp-313 provides a ligand contact to substrate. Residues Asn-333, Asn-364, Asn-398, and Asn-420 are each glycosylated (N-linked (GlcNAc...) asparagine).

The protein belongs to the glycosyl hydrolase 32 family.

It carries out the reaction Hydrolysis of terminal non-reducing beta-D-fructofuranoside residues in beta-D-fructofuranosides.. This Wickerhamomyces anomalus (Yeast) protein is Invertase (INV1).